The following is a 642-amino-acid chain: Threonine--tRNA ligase (642 aa).

Positions 1–61 constitute a TGS domain; sequence MPVIRFYDGS…REDAFIEFVD (61 aa). The segment at 243 to 534 is catalytic; that stretch reads DHRKIGKFLQ…LIEECSGNLP (292 aa). Zn(2+) is bound by residues C334, H385, and H511.

The protein belongs to the class-II aminoacyl-tRNA synthetase family. As to quaternary structure, homodimer. Zn(2+) serves as cofactor.

The protein localises to the cytoplasm. It catalyses the reaction tRNA(Thr) + L-threonine + ATP = L-threonyl-tRNA(Thr) + AMP + diphosphate + H(+). Its function is as follows. Catalyzes the attachment of threonine to tRNA(Thr) in a two-step reaction: L-threonine is first activated by ATP to form Thr-AMP and then transferred to the acceptor end of tRNA(Thr). Also edits incorrectly charged L-seryl-tRNA(Thr). This Buchnera aphidicola subsp. Acyrthosiphon pisum (strain Tuc7) protein is Threonine--tRNA ligase.